Reading from the N-terminus, the 375-residue chain is CMP-N-acetylneuraminate-beta-1,4-galactoside alpha-2,3-sialyltransferase (375 aa).

The Cytoplasmic segment spans residues 1–8 (MGLLVFVR). Residues 9-28 (NLLLALCLFLVLGFLYYSAW) traverse the membrane as a helical; Signal-anchor for type II membrane protein segment. The Lumenal segment spans residues 29–375 (KLHLLQWEED…RVITDLSSGI (347 aa)). 2 N-linked (GlcNAc...) asparagine glycosylation sites follow: asparagine 80 and asparagine 171. Cysteine 160 and cysteine 314 form a disulfide bridge.

The protein belongs to the glycosyltransferase 29 family. In terms of processing, the soluble form derives from the membrane form by proteolytic processing. In terms of tissue distribution, highly expressed in adult skeletal muscle and in all fetal tissues examined and to a much lesser extent in placenta, lung and liver.

It is found in the golgi apparatus. It localises to the golgi stack membrane. The protein resides in the secreted. It catalyses the reaction a beta-D-galactosyl-(1-&gt;4)-N-acetyl-beta-D-glucosaminyl derivative + CMP-N-acetyl-beta-neuraminate = an N-acetyl-alpha-neuraminyl-(2-&gt;3)-beta-D-galactosyl-(1-&gt;4)-N-acetyl-beta-D-glucosaminyl derivative + CMP + H(+). Its pathway is protein modification; protein glycosylation. Its function is as follows. Catalyzes the formation of the NeuAc-alpha-2,3-Gal-beta-1,4-GlcNAc-, NeuAc-alpha-2,3-Gal-beta-1,3-GlcNAc- and NeuAc-alpha-2,3-Gal-beta-1,3-GalNAc- sequences found in terminal carbohydrate groups of glycoproteins and glycolipids. The highest activity is toward Gal-beta-1,3-GlcNAc and the lowest toward Gal-beta-1,3-GalNAc. This is CMP-N-acetylneuraminate-beta-1,4-galactoside alpha-2,3-sialyltransferase (ST3GAL3) from Homo sapiens (Human).